A 276-amino-acid chain; its full sequence is Putative metal-binding protein CT_415 (276 aa).

The signal sequence occupies residues 1–18; sequence MRLLFLLLFSLGITCSYG. A divalent metal cation is bound by residues His-59, His-121, His-185, and Asp-256.

This sequence belongs to the bacterial solute-binding protein 9 family.

The protein localises to the periplasm. Its function is as follows. Part of an ATP-binding cassette (ABC) transport system involved in metal import. Binds a metal with high affinity and specificity and delivers it to the membrane permease for translocation into the cytoplasm. The protein is Putative metal-binding protein CT_415 of Chlamydia trachomatis serovar D (strain ATCC VR-885 / DSM 19411 / UW-3/Cx).